The following is a 689-amino-acid chain: MSRVLVIEQREGEEKTLIQKHIFRPFPNTRRVVIDHLQRLKNFLFRIGDDWYFLFALGVIMALISFTMDFTVSKMLNAHRWLQQELGGNVLLRYLSWIVYPIALVAFSTGFAQSITPHSGGSGIPELKTILSGVILEEYLTIKNFGAKVVGLTCTLSAGSTMFLGKVGPFVHLSSMIAAYLGRMRTSVAGDYENKSKEHEMLVAAAAVGVSTVFGAPISGVLFSVEVMSSHFAIRNYWRGFFAATCGAFVFRLLAVFNSEQETITAVFKTSFKISFPFDLPEMFFFAILGVVCGLIGCAYLFCQRWLLGYVRRNSLTSKLLASDKPMYSALVALLISSITFPESLGQFLASRLTMKELLTSLFDNRTWWISLSQNSSLDRSPLVDPNNLWLEWANPQFTIFGTLAFFIIMKFWMFILATTLPMPAGYFMPVFVFGAAIGRLVGETVALLYPEGIAADGIVNPIIPGGYAWQGAPAYSGAVTHSVSTALLAFEATGQIAHILPVILCVLIANAFTQKLQPSFYDGTIIVKKLPYLPRIRSRDIDSYKVNTEEFMNPDIRVLPREAGFEDVLKVITASDDSEYPVVDNTESQVLVGTVKRPQLIHFLETHESHERAGPTEKENLSEGNLGEACSIEPVTFQLSTWTSLHQAHHLFELLHLQKAFVTKYGRIVGQVTRKEMKKAIEDLANPK.

Residues 1-51 (MSRVLVIEQREGEEKTLIQKHIFRPFPNTRRVVIDHLQRLKNFLFRIGDDW) are Cytoplasmic-facing. Transmembrane regions (helical) follow at residues 52 to 83 (YFLF…RWLQ) and 92 to 112 (LRYL…TGFA). An intramembrane region (helical) is located at residues 117–128 (PHSGGSGIPELK). Residue serine 122 participates in chloride binding. A run of 2 helical transmembrane segments spans residues 142 to 161 (IKNF…AGST) and 162 to 181 (MFLG…AAYL). An N-linked (GlcNAc...) asparagine glycan is attached at asparagine 194. Positions 204-225 (AAAAVGVSTVFGAPISGVLFSV) form an intramembrane region, helical. A helical transmembrane segment spans residues 237 to 256 (YWRGFFAATCGAFVFRLLAV). Residues glutamate 260, glutamate 262, aspartate 279, and glutamate 282 each contribute to the Ca(2+) site. The next 2 helical transmembrane spans lie at 283–311 (MFFF…LGYV) and 326–343 (PMYS…TFPE). Residues 350–361 (ASRLTMKELLTS) constitute an intramembrane region (helical). A run of 2 helical transmembrane segments spans residues 402–422 (GTLA…TTLP) and 423–442 (MPAG…GRLV). Phenylalanine 428 contributes to the chloride binding site. Residues 466 to 498 (GGYAWQGAPAYSGAVTHSVSTALLAFEATGQIA) constitute an intramembrane region (helical). The helical transmembrane segment at 502-522 (PVILCVLIANAFTQKLQPSFY) threads the bilayer. Over 523–689 (DGTIIVKKLP…KAIEDLANPK (167 aa)) the chain is Cytoplasmic. CBS domains are found at residues 553–613 (MNPD…SHER) and 630–689 (ACSI…ANPK).

The protein belongs to the chloride channel (TC 2.A.49) family. Post-translationally, N-glycosylated on a single asparagine, probably Asn-365 or Asn-375. Expressed in two distinct regions of the kidney; the proximal convoluted tubule and the diluting segment.

The protein localises to the cell membrane. In terms of biological role, voltage-gated chloride channel. Chloride channels have several functions including the regulation of cell volume, the stabilization of membrane potential, signal transduction and transepithelial transport. This Xenopus laevis (African clawed frog) protein is Chloride channel protein ClC-Kb (clcnkb).